We begin with the raw amino-acid sequence, 405 residues long: S-arrestin (405 aa).

Thr-234 bears the Phosphothreonine mark.

This sequence belongs to the arrestin family. Monomer. Homodimer. Homotetramer. Interacts with RHO (via the phosphorylated C-terminus). In terms of tissue distribution, detected in retina, in the proximal portion of the outer segment of rod photoreceptor cells (at protein level).

The protein localises to the cell projection. The protein resides in the cilium. Its subcellular location is the photoreceptor outer segment. It localises to the membrane. In terms of biological role, binds to photoactivated, phosphorylated RHO and terminates RHO signaling via G-proteins by competing with G-proteins for the same binding site on RHO. May play a role in preventing light-dependent degeneration of retinal photoreceptor cells. The sequence is that of S-arrestin (SAG) from Homo sapiens (Human).